Here is a 512-residue protein sequence, read N- to C-terminus: NAD(P)H-quinone oxidoreductase chain 4, chloroplastic (512 aa).

Helical transmembrane passes span valine 4–leucine 24, tryptophan 34–tyrosine 54, isoleucine 87–valine 107, proline 111–serine 131, isoleucine 134–methionine 154, phenylalanine 167–leucine 187, glycine 208–phenylalanine 228, histidine 242–isoleucine 262, threonine 274–valine 294, serine 308–leucine 328, glycine 330–glycine 350, methionine 374–serine 396, isoleucine 417–valine 437, and valine 462–alanine 482.

The protein belongs to the complex I subunit 4 family.

It localises to the plastid. The protein localises to the chloroplast thylakoid membrane. It carries out the reaction a plastoquinone + NADH + (n+1) H(+)(in) = a plastoquinol + NAD(+) + n H(+)(out). The enzyme catalyses a plastoquinone + NADPH + (n+1) H(+)(in) = a plastoquinol + NADP(+) + n H(+)(out). The sequence is that of NAD(P)H-quinone oxidoreductase chain 4, chloroplastic from Zygnema circumcarinatum (Green alga).